Consider the following 172-residue polypeptide: Large ribosomal subunit protein uL10 (172 aa).

Belongs to the universal ribosomal protein uL10 family. As to quaternary structure, part of the ribosomal stalk of the 50S ribosomal subunit. The N-terminus interacts with L11 and the large rRNA to form the base of the stalk. The C-terminus forms an elongated spine to which L12 dimers bind in a sequential fashion forming a multimeric L10(L12)X complex.

Functionally, forms part of the ribosomal stalk, playing a central role in the interaction of the ribosome with GTP-bound translation factors. The polypeptide is Large ribosomal subunit protein uL10 (Chlorobium limicola (strain DSM 245 / NBRC 103803 / 6330)).